Consider the following 760-residue polypeptide: Dipeptidyl peptidase 4 (760 aa).

Topologically, residues 1 to 6 (MKTPWK) are cytoplasmic. The helical; Signal-anchor for type II membrane protein transmembrane segment at 7-28 (VLLGLLGVAALVTIITVPIVLL) threads the bilayer. Over 29–760 (SKDEAAADSR…HFLQQCFSLH (732 aa)) the chain is Extracellular. Asn-83, Asn-90, Asn-144, Asn-213, Asn-223, Asn-315, and Asn-328 each carry an N-linked (GlcNAc...) asparagine glycan. 4 disulfide bridges follow: Cys-322/Cys-333, Cys-379/Cys-388, Cys-438/Cys-441, and Cys-448/Cys-466. N-linked (GlcNAc...) asparagine glycosylation occurs at Asn-514. Catalysis depends on Ser-624, which acts as the Charge relay system. Residues Cys-643 and Cys-756 are joined by a disulfide bond. N-linked (GlcNAc...) asparagine glycosylation occurs at Asn-679. Residues Asp-702 and His-734 each act as charge relay system in the active site.

The protein belongs to the peptidase S9B family. DPPIV subfamily. In terms of assembly, monomer. Homodimer. Heterodimer with Seprase (FAP). Requires homodimerization for optimal dipeptidyl peptidase activity and T-cell costimulation. Found in a membrane raft complex, at least composed of BCL10, CARD11, DPP4 and IKBKB. Associates with collagen. Interacts with PTPRC; the interaction is enhanced in an interleukin-12-dependent manner in activated lymphocytes. Interacts (via extracellular domain) with ADA; does not inhibit its dipeptidyl peptidase activity. Interacts with CAV1 (via the N-terminus); the interaction is direct. Interacts (via cytoplasmic tail) with CARD11 (via PDZ domain); its homodimerization is necessary for interaction with CARD11. Interacts with IGF2R; the interaction is direct. Interacts with GPC3. In terms of processing, the soluble form (Dipeptidyl peptidase 4 soluble form also named SDPP) derives from the membrane form (Dipeptidyl peptidase 4 membrane form also named MDPP) by proteolytic processing. Post-translationally, N- and O-Glycosylated. Phosphorylated. Mannose 6-phosphate residues in the carbohydrate moiety are necessary for interaction with IGF2R in activated T-cells. Mannose 6-phosphorylation is induced during T-cell activation.

It localises to the secreted. The protein resides in the cell membrane. Its subcellular location is the apical cell membrane. It is found in the cell projection. The protein localises to the invadopodium membrane. It localises to the lamellipodium membrane. The protein resides in the cell junction. Its subcellular location is the membrane raft. It carries out the reaction Release of an N-terminal dipeptide, Xaa-Yaa-|-Zaa-, from a polypeptide, preferentially when Yaa is Pro, provided Zaa is neither Pro nor hydroxyproline.. Inhibited by GPC3 and diprotin A. Functionally, cell surface glycoprotein receptor involved in the costimulatory signal essential for T-cell receptor (TCR)-mediated T-cell activation. Acts as a positive regulator of T-cell coactivation, by binding at least ADA, CAV1, IGF2R, and PTPRC. Its binding to CAV1 and CARD11 induces T-cell proliferation and NF-kappa-B activation in a T-cell receptor/CD3-dependent manner. Its interaction with ADA also regulates lymphocyte-epithelial cell adhesion. In association with FAP is involved in the pericellular proteolysis of the extracellular matrix (ECM), the migration and invasion of endothelial cells into the ECM. May be involved in the promotion of lymphatic endothelial cells adhesion, migration and tube formation. When overexpressed, enhanced cell proliferation, a process inhibited by GPC3. Also acts as a serine exopeptidase with a dipeptidyl peptidase activity that regulates various physiological processes by cleaving peptides in the circulation, including many chemokines, mitogenic growth factors, neuropeptides and peptide hormones. Removes N-terminal dipeptides sequentially from polypeptides having unsubstituted N-termini provided that the penultimate residue is proline. The chain is Dipeptidyl peptidase 4 (Dpp4) from Mus musculus (Mouse).